The primary structure comprises 264 residues: Thymidylate synthase (264 aa).

A dUMP-binding site is contributed by arginine 21. Histidine 51 is a (6R)-5,10-methylene-5,6,7,8-tetrahydrofolate binding site. Arginine 126–arginine 127 provides a ligand contact to dUMP. Cysteine 146 functions as the Nucleophile in the catalytic mechanism. DUMP is bound by residues arginine 166–aspartate 169, asparagine 177, and histidine 207–tyrosine 209. Aspartate 169 serves as a coordination point for (6R)-5,10-methylene-5,6,7,8-tetrahydrofolate. Alanine 263 is a (6R)-5,10-methylene-5,6,7,8-tetrahydrofolate binding site.

This sequence belongs to the thymidylate synthase family. Bacterial-type ThyA subfamily. As to quaternary structure, homodimer.

It localises to the cytoplasm. It catalyses the reaction dUMP + (6R)-5,10-methylene-5,6,7,8-tetrahydrofolate = 7,8-dihydrofolate + dTMP. It functions in the pathway pyrimidine metabolism; dTTP biosynthesis. Catalyzes the reductive methylation of 2'-deoxyuridine-5'-monophosphate (dUMP) to 2'-deoxythymidine-5'-monophosphate (dTMP) while utilizing 5,10-methylenetetrahydrofolate (mTHF) as the methyl donor and reductant in the reaction, yielding dihydrofolate (DHF) as a by-product. This enzymatic reaction provides an intracellular de novo source of dTMP, an essential precursor for DNA biosynthesis. This is Thymidylate synthase from Shigella boydii serotype 4 (strain Sb227).